Consider the following 160-residue polypeptide: Nucleotide-binding protein VF_1240 (160 aa).

It belongs to the YajQ family.

Functionally, nucleotide-binding protein. This Aliivibrio fischeri (strain ATCC 700601 / ES114) (Vibrio fischeri) protein is Nucleotide-binding protein VF_1240.